A 116-amino-acid chain; its full sequence is MKGENVFISPASISSVLTILYYGANGSTAEQLSKYVETEENTDKVSAQNISFKSINKVYGRYSAVFKDFFLGKIGDKFQTVDFTDCRTIDAINKCVDIFTEGKINPLLDEPLSPSN.

The protein belongs to the serpin family. Poxviruses subfamily.

The sequence is that of Putative serine proteinase inhibitor 2 homolog first part from Vaccinia virus (strain Copenhagen) (VACV).